A 113-amino-acid chain; its full sequence is N(2)-fixation sustaining protein CowN (113 aa).

The protein belongs to the CowN family.

Is required to sustain N(2)-dependent growth in the presence of low levels of carbon monoxide (CO). Probably acts by protecting the N(2) fixation ability of the nitrogenase complex, which is inactivated in the presence of CO. This chain is N(2)-fixation sustaining protein CowN, found in Wolinella succinogenes (strain ATCC 29543 / DSM 1740 / CCUG 13145 / JCM 31913 / LMG 7466 / NCTC 11488 / FDC 602W) (Vibrio succinogenes).